The primary structure comprises 496 residues: GTPase Der (496 aa).

EngA-type G domains lie at proline 3–phenylalanine 166 and valine 209–threonine 382. Residues glycine 9–serine 16, aspartate 56–isoleucine 60, asparagine 118–aspartate 121, glycine 215–serine 222, aspartate 262–valine 266, and asparagine 327–aspartate 330 contribute to the GTP site. In terms of domain architecture, KH-like spans arginine 383–glutamate 467.

Belongs to the TRAFAC class TrmE-Era-EngA-EngB-Septin-like GTPase superfamily. EngA (Der) GTPase family. Associates with the 50S ribosomal subunit.

In terms of biological role, GTPase that plays an essential role in the late steps of ribosome biogenesis. This is GTPase Der from Proteus mirabilis (strain HI4320).